Consider the following 320-residue polypeptide: Meso-diaminopimelate D-dehydrogenase (320 aa).

NADP(+)-binding positions include 11–14 (YGNL), 35–37 (SRR), 65–68 (CMGS), 88–90 (TYD), and 117–121 (TGWDP). Residues Asp90, Asp120, Trp144, 150 to 151 (QG), Thr169, Arg195, His244, and Asn270 each bind substrate.

As to quaternary structure, homodimer.

The catalysed reaction is meso-2,6-diaminopimelate + NADP(+) + H2O = (S)-2-amino-6-oxoheptanedioate + NH4(+) + NADPH + H(+). It participates in amino-acid biosynthesis; L-lysine biosynthesis via DAP pathway; DL-2,6-diaminopimelate from (S)-tetrahydrodipicolinate: step 1/1. With respect to regulation, l,L-2,6-diaminopimelate and D,D-2,6-diaminopimelate competitively inhibit the oxidative deamination of meso-2,6-diaminopimelate. The enzyme is also inhibited by L-cysteine, and by p-chloromercuribenzoate, iodoacetic acid and HgCl(2) in vitro. In terms of biological role, catalyzes the reversible NADPH-dependent reductive amination of L-2-amino-6-oxopimelate, the acyclic form of L-tetrahydrodipicolinate, to generate the meso compound, D,L-2,6-diaminopimelate. Probably plays a role in lysine biosynthesis. Exhibits a high substrate specificity for meso-2,6-diaminopimelate, since L,L-2,6-diaminopimelate, D,D-2,6-diaminopimelate, L-glutamate, L-alanine, L-leucine, L-valine, L-aspartate, L-threonine, L-homoserine, L-methionine, L-lysine, L-serine, L-phenylalanine, L-tyrosine, L-tryptophan, L-ornithine, L-histidine, L-arginine, D-glutamate, and D-alanine are not substrates for the oxidative deamination reaction. Can use NAD(+) only poorly since the activity observed in the presence of NAD(+) is about 3% of that with NADP(+). The protein is Meso-diaminopimelate D-dehydrogenase (ddh) of Corynebacterium glutamicum (strain ATCC 13032 / DSM 20300 / JCM 1318 / BCRC 11384 / CCUG 27702 / LMG 3730 / NBRC 12168 / NCIMB 10025 / NRRL B-2784 / 534).